Here is a 376-residue protein sequence, read N- to C-terminus: UPF0754 membrane protein SSP0953 (376 aa).

A run of 2 helical transmembrane segments spans residues 4–24 (FLVIIFMMVIGALIGGVTNVI) and 356–376 (FLGFLLGGIIGLFQGVIAIFV).

The protein belongs to the UPF0754 family.

Its subcellular location is the cell membrane. The sequence is that of UPF0754 membrane protein SSP0953 from Staphylococcus saprophyticus subsp. saprophyticus (strain ATCC 15305 / DSM 20229 / NCIMB 8711 / NCTC 7292 / S-41).